A 260-amino-acid polypeptide reads, in one-letter code: 3-methyl-2-oxobutanoate hydroxymethyltransferase (260 aa).

Residues Asp42 and Asp81 each contribute to the Mg(2+) site. Residues 42–43, Asp81, and Lys109 each bind 3-methyl-2-oxobutanoate; that span reads DS. Glu111 lines the Mg(2+) pocket. The Proton acceptor role is filled by Glu178.

This sequence belongs to the PanB family. As to quaternary structure, homodecamer; pentamer of dimers. Mg(2+) serves as cofactor.

It is found in the cytoplasm. It catalyses the reaction 3-methyl-2-oxobutanoate + (6R)-5,10-methylene-5,6,7,8-tetrahydrofolate + H2O = 2-dehydropantoate + (6S)-5,6,7,8-tetrahydrofolate. It functions in the pathway cofactor biosynthesis; (R)-pantothenate biosynthesis; (R)-pantoate from 3-methyl-2-oxobutanoate: step 1/2. Catalyzes the reversible reaction in which hydroxymethyl group from 5,10-methylenetetrahydrofolate is transferred onto alpha-ketoisovalerate to form ketopantoate. This Vesicomyosocius okutanii subsp. Calyptogena okutanii (strain HA) protein is 3-methyl-2-oxobutanoate hydroxymethyltransferase.